Consider the following 132-residue polypeptide: Fluoride-specific ion channel FluC 2 (132 aa).

Transmembrane regions (helical) follow at residues 12–32, 41–61, 65–85, and 96–116; these read LTELLLVAVGAVPGALLRWQL, LLVNVLGAALLGLLAGRPVAP, LLVGIGFCGSLTTFSSWMLAA, and AALGLIGLTLGLGLGAAALGF. Na(+) is bound by residues Gly73 and Thr76.

It belongs to the fluoride channel Fluc/FEX (TC 1.A.43) family.

Its subcellular location is the cell inner membrane. It carries out the reaction fluoride(in) = fluoride(out). Its activity is regulated as follows. Na(+) is not transported, but it plays an essential structural role and its presence is essential for fluoride channel function. In terms of biological role, fluoride-specific ion channel. Important for reducing fluoride concentration in the cell, thus reducing its toxicity. This chain is Fluoride-specific ion channel FluC 2, found in Parasynechococcus marenigrum (strain WH8102).